Reading from the N-terminus, the 328-residue chain is MNGQWYKHLIGARTIKTGIAIFLTAVFCMALDLTPIYAILTAVVTIEPTAKASLIKGYRRLPATVIGAGFAVLFTYLFGDQSPFTYALSATFTILFCTKLKLQVGTNVAVLTSLAMIPGIHDAYIFNFLSRTLTAIIGLVTSGLINFMVFPPKYYGQVEEKLSKTDALMYKLFYNRCQEIILSRLQSDKSEKAYKNIFNLNNQVETLISYQRDELSYHKKKECDWKLLNQLTKRAYTNRLFITHLSNIIYLPKNTRVNFSGDEKMALLKISSSIKDIFYDGSFKREDDSVETLRSTIKALEISGENQIKSHILYEVLMIYRLLDSRYA.

The next 4 helical transmembrane spans lie at 19–39 (IAIFLTAVFCMALDLTPIYAI), 61–81 (LPATVIGAGFAVLFTYLFGDQ), 108–128 (VAVLTSLAMIPGIHDAYIFNF), and 132–152 (TLTAIIGLVTSGLINFMVFPP).

This sequence belongs to the UPF0421 family.

Its subcellular location is the cell membrane. The sequence is that of UPF0421 protein SAR1980 from Staphylococcus aureus (strain MRSA252).